A 139-amino-acid chain; its full sequence is Putative pre-16S rRNA nuclease (139 aa).

This sequence belongs to the YqgF nuclease family.

It is found in the cytoplasm. In terms of biological role, could be a nuclease involved in processing of the 5'-end of pre-16S rRNA. The sequence is that of Putative pre-16S rRNA nuclease from Streptococcus pyogenes serotype M1.